The following is a 215-amino-acid chain: Thiopurine S-methyltransferase (215 aa).

S-adenosyl-L-methionine-binding residues include Trp10, Leu45, Glu66, and Arg123.

The protein belongs to the class I-like SAM-binding methyltransferase superfamily. TPMT family.

Its subcellular location is the cytoplasm. The enzyme catalyses S-adenosyl-L-methionine + a thiopurine = S-adenosyl-L-homocysteine + a thiopurine S-methylether.. In Pseudomonas putida (strain W619), this protein is Thiopurine S-methyltransferase.